The primary structure comprises 233 residues: Probable translation initiation factor, mitochondrial (233 aa).

A mitochondrion-targeting transit peptide spans 1–39 (MNSYLQFPHRKLFIQFSYSLTSVFRKCQSRTFMNSQFAS).

This sequence belongs to the IF-3 family.

The protein resides in the mitochondrion. May be involved in mitochondrial translation initiation. The protein is Probable translation initiation factor, mitochondrial of Schizosaccharomyces pombe (strain 972 / ATCC 24843) (Fission yeast).